Here is a 363-residue protein sequence, read N- to C-terminus: Sensor protein BasS (363 aa).

At 1 to 13 the chain is on the cytoplasmic side; sequence MHFLRRPISLRQR. The helical transmembrane segment at 14 to 34 threads the bilayer; the sequence is LILTIGAILLVFELISVFWLW. The Periplasmic segment spans residues 35-64; it reads HESTEQIQLFEQALRDNRNNDRHIMREIRE. The chain crosses the membrane as a helical span at residues 65-88; sequence AVASLIVPGVFMVSLTLFICYQAV. In terms of domain architecture, HAMP spans 89-141; that stretch reads RRITRPLAELQKELEARTADNLTPIAIHSATLEIEAVVSALNDLVSRLTSTLD. The Cytoplasmic segment spans residues 89 to 363; the sequence is RRITRPLAEL…KKDQYVANQI (275 aa). The Histidine kinase domain maps to 149–357; the sequence is DVAHELRTPL…RAWVRLKKDQ (209 aa). Residue His-152 is modified to Phosphohistidine; by autocatalysis.

In terms of processing, autophosphorylated.

It is found in the cell inner membrane. It catalyses the reaction ATP + protein L-histidine = ADP + protein N-phospho-L-histidine.. Its function is as follows. Member of the two-component regulatory system BasS/BasR Autophosphorylates and activates BasR by phosphorylation. The protein is Sensor protein BasS (basS) of Escherichia coli (strain K12).